The primary structure comprises 71 residues: Translation initiation factor IF-1 (71 aa).

One can recognise an S1-like domain in the interval 1 to 71; the sequence is MANDVIEIEG…TKGRITYRFR (71 aa).

This sequence belongs to the IF-1 family. As to quaternary structure, component of the 30S ribosomal translation pre-initiation complex which assembles on the 30S ribosome in the order IF-2 and IF-3, IF-1 and N-formylmethionyl-tRNA(fMet); mRNA recruitment can occur at any time during PIC assembly.

It localises to the cytoplasm. Its function is as follows. One of the essential components for the initiation of protein synthesis. Stabilizes the binding of IF-2 and IF-3 on the 30S subunit to which N-formylmethionyl-tRNA(fMet) subsequently binds. Helps modulate mRNA selection, yielding the 30S pre-initiation complex (PIC). Upon addition of the 50S ribosomal subunit IF-1, IF-2 and IF-3 are released leaving the mature 70S translation initiation complex. This Leuconostoc mesenteroides subsp. mesenteroides (strain ATCC 8293 / DSM 20343 / BCRC 11652 / CCM 1803 / JCM 6124 / NCDO 523 / NBRC 100496 / NCIMB 8023 / NCTC 12954 / NRRL B-1118 / 37Y) protein is Translation initiation factor IF-1.